Here is a 347-residue protein sequence, read N- to C-terminus: MFIDNVKLVLSSGNGGKGAVSFRREKHVPLGGPDGGDGGNGGDVYFICDNNTHTLAHFKGKKELKAQNGQPGLGRNKNGKRGESLELIVPQGTQVIDAQSGEVLLDMLVEGQKELFLKGGKGGLGNTHFKNSTNQRPDYAQSGVAGKTLSVRLELKLIADVGLVGFPNVGKSTLISVVSNARPEIANYEFTTLTPKLGMVEVDDYNSFVMADIPGIIEGASDGRGLGLEFLRHIERTSFLLFVLDPLRDMSLKEQFCILRKELEKFSSKLYTRNFGLMLSKSDSINLGEEFAQKMEDDYNELKAYLQSQNNPQSFFIKVSSLEKTGLKELKFMLLEEVKKIRNQNNL.

The 158-residue stretch at 1–158 (MFIDNVKLVL…LSVRLELKLI (158 aa)) folds into the Obg domain. The 181-residue stretch at 159-339 (ADVGLVGFPN…LKFMLLEEVK (181 aa)) folds into the OBG-type G domain. GTP is bound by residues 165 to 172 (GFPNVGKS), 190 to 194 (FTTLT), 212 to 215 (DIPG), 280 to 283 (SKSD), and 320 to 322 (SSL). Mg(2+)-binding residues include serine 172 and threonine 192.

This sequence belongs to the TRAFAC class OBG-HflX-like GTPase superfamily. OBG GTPase family. As to quaternary structure, monomer. It depends on Mg(2+) as a cofactor.

The protein localises to the cytoplasm. Functionally, an essential GTPase which binds GTP, GDP and possibly (p)ppGpp with moderate affinity, with high nucleotide exchange rates and a fairly low GTP hydrolysis rate. Plays a role in control of the cell cycle, stress response, ribosome biogenesis and in those bacteria that undergo differentiation, in morphogenesis control. The polypeptide is GTPase Obg (Campylobacter lari (strain RM2100 / D67 / ATCC BAA-1060)).